A 171-amino-acid polypeptide reads, in one-letter code: Large ribosomal subunit protein uL10 (171 aa).

The protein belongs to the universal ribosomal protein uL10 family. In terms of assembly, part of the ribosomal stalk of the 50S ribosomal subunit. The N-terminus interacts with L11 and the large rRNA to form the base of the stalk. The C-terminus forms an elongated spine to which L12 dimers bind in a sequential fashion forming a multimeric L10(L12)X complex.

Forms part of the ribosomal stalk, playing a central role in the interaction of the ribosome with GTP-bound translation factors. This is Large ribosomal subunit protein uL10 from Rhizorhabdus wittichii (strain DSM 6014 / CCUG 31198 / JCM 15750 / NBRC 105917 / EY 4224 / RW1) (Sphingomonas wittichii).